Consider the following 200-residue polypeptide: UPF0637 protein LCK_01372 (200 aa).

It belongs to the UPF0637 family.

The protein is UPF0637 protein LCK_01372 of Leuconostoc citreum (strain KM20).